A 76-amino-acid polypeptide reads, in one-letter code: cAMP-dependent protein kinase inhibitor alpha (76 aa).

Thr-2 carries the post-translational modification N-acetylthreonine. Residues Lys-49–Ser-76 are disordered.

The protein belongs to the PKI family. Present at high levels in skeletal muscle and brain but is present at lower levels in heart, testis and liver.

Functionally, extremely potent competitive inhibitor of cAMP-dependent protein kinase activity, this protein interacts with the catalytic subunit of the enzyme after the cAMP-induced dissociation of its regulatory chains. This chain is cAMP-dependent protein kinase inhibitor alpha (Pkia), found in Mus musculus (Mouse).